Consider the following 334-residue polypeptide: N-acetyl-gamma-glutamyl-phosphate reductase (334 aa).

Cys154 is a catalytic residue.

The protein belongs to the NAGSA dehydrogenase family. Type 1 subfamily.

The protein resides in the cytoplasm. The catalysed reaction is N-acetyl-L-glutamate 5-semialdehyde + phosphate + NADP(+) = N-acetyl-L-glutamyl 5-phosphate + NADPH + H(+). Its pathway is amino-acid biosynthesis; L-arginine biosynthesis; N(2)-acetyl-L-ornithine from L-glutamate: step 3/4. Functionally, catalyzes the NADPH-dependent reduction of N-acetyl-5-glutamyl phosphate to yield N-acetyl-L-glutamate 5-semialdehyde. The polypeptide is N-acetyl-gamma-glutamyl-phosphate reductase (Buchnera aphidicola subsp. Schizaphis graminum (strain Sg)).